The primary structure comprises 268 residues: Single-stranded DNA-binding protein WHY3, chloroplastic (268 aa).

A chloroplast-targeting transit peptide spans 1-75 (MSQLLSSPPM…KQRFGDSSSS (75 aa)). Residues 93-98 (KGKAAL) are required for ssDNA binding. Residues 171 to 185 (KGKGSDEGKVRKVLK) carry the Nuclear localization signal motif.

The protein belongs to the Whirly family. In terms of assembly, homotetramer.

It localises to the plastid. The protein resides in the chloroplast. The protein localises to the nucleus. Its function is as follows. Single-stranded DNA-binding protein that functions in both chloroplasts and nucleus. In chloroplasts, maintains plastid genome stability by preventing break-induced and short homology-dependent illegitimate recombinations. In the nucleus, is recruited to a distal element upstream of the kinesin KP1 to mediate the transcriptional repression of KP1. Can bind double-stranded DNA in vivo. In Arabidopsis thaliana (Mouse-ear cress), this protein is Single-stranded DNA-binding protein WHY3, chloroplastic (WHY3).